The primary structure comprises 202 residues: Securin-2 (202 aa).

A disordered region spans residues 60–105 (TRKALGTVNRATEKSVKTNGPRKQKQPSFSAKKMTEKTVKTKSSVP). A D-box motif is present at residues 61 to 64 (RKAL). The SH3-binding motif lies at 163 to 173 (PPSPVKMPSPP).

It belongs to the securin family. Expressed at low levels in the pituitary, liver, spleen, prostate, testis, ovary, small intestine and colon. Also expressed in various pituitary, testicular, liver and ovarian tumors.

The protein localises to the cytoplasm. It localises to the nucleus. The sequence is that of Securin-2 (PTTG2) from Homo sapiens (Human).